The primary structure comprises 201 residues: 3-isopropylmalate dehydratase small subunit (201 aa).

The protein belongs to the LeuD family. LeuD type 1 subfamily. Heterodimer of LeuC and LeuD.

The enzyme catalyses (2R,3S)-3-isopropylmalate = (2S)-2-isopropylmalate. Its pathway is amino-acid biosynthesis; L-leucine biosynthesis; L-leucine from 3-methyl-2-oxobutanoate: step 2/4. In terms of biological role, catalyzes the isomerization between 2-isopropylmalate and 3-isopropylmalate, via the formation of 2-isopropylmaleate. This is 3-isopropylmalate dehydratase small subunit from Shewanella oneidensis (strain ATCC 700550 / JCM 31522 / CIP 106686 / LMG 19005 / NCIMB 14063 / MR-1).